We begin with the raw amino-acid sequence, 721 residues long: Phosphomethylpyrimidine synthase (721 aa).

Residues asparagine 256, methionine 285, tyrosine 314, histidine 350, 370-372 (SRG), 411-414 (DGMR), and glutamate 450 each bind substrate. Zn(2+) is bound at residue histidine 454. Residue tyrosine 477 coordinates substrate. Histidine 518 is a binding site for Zn(2+). [4Fe-4S] cluster contacts are provided by cysteine 598, cysteine 601, and cysteine 606.

This sequence belongs to the ThiC family. As to quaternary structure, homodimer. Requires [4Fe-4S] cluster as cofactor.

The enzyme catalyses 5-amino-1-(5-phospho-beta-D-ribosyl)imidazole + S-adenosyl-L-methionine = 4-amino-2-methyl-5-(phosphooxymethyl)pyrimidine + CO + 5'-deoxyadenosine + formate + L-methionine + 3 H(+). It functions in the pathway cofactor biosynthesis; thiamine diphosphate biosynthesis. Its function is as follows. Catalyzes the synthesis of the hydroxymethylpyrimidine phosphate (HMP-P) moiety of thiamine from aminoimidazole ribotide (AIR) in a radical S-adenosyl-L-methionine (SAM)-dependent reaction. This is Phosphomethylpyrimidine synthase from Shewanella oneidensis (strain ATCC 700550 / JCM 31522 / CIP 106686 / LMG 19005 / NCIMB 14063 / MR-1).